The primary structure comprises 391 residues: Histamine H4 receptor (391 aa).

Over 1–19 the chain is Extracellular; it reads MSESNSTGILPPAAQVPLA. The N-linked (GlcNAc...) asparagine glycan is linked to Asn-5. Residues 20–40 form a helical membrane-spanning segment; it reads FLMSSFAFAIMVGNAVVILAF. At 41–52 the chain is on the cytoplasmic side; that stretch reads VVDRNLRHRSNY. A helical transmembrane segment spans residues 53–73; it reads FFLNLAISDFLVGLISIPLYI. Residues 74–87 are Extracellular-facing; that stretch reads PHVLFNWNFGSGIC. A disulfide bond links Cys-87 and Cys-166. A helical membrane pass occupies residues 88 to 108; the sequence is MFWLITDYLLCTASVYNIVLI. Topologically, residues 109-131 are cytoplasmic; that stretch reads SYDRYQSVSNAVSYRAQHTGIMK. A helical membrane pass occupies residues 132 to 152; that stretch reads IVAQMVAVWILAFLVNGPMIL. Residues 153–174 lie on the Extracellular side of the membrane; sequence ASDSWKNSTNTKDCEPGFVTEW. Asn-159 is a glycosylation site (N-linked (GlcNAc...) asparagine). The chain crosses the membrane as a helical span at residues 175 to 195; it reads YILTITMLLEFLLPVISVAYF. At 196-306 the chain is on the cytoplasmic side; that stretch reads NVQIYWSLWK…LLRGRKLARS (111 aa). A disordered region spans residues 238-258; sequence TSNPGLKESAASRHSESPRRK. Residues 247 to 256 are compositionally biased toward basic and acidic residues; that stretch reads AASRHSESPR. The chain crosses the membrane as a helical span at residues 307 to 327; the sequence is LAILLSAFAICWAPYCLFTIV. Topologically, residues 328–343 are extracellular; sequence LSTYPRTERPKSVWYS. A helical transmembrane segment spans residues 344–364; sequence IAFWLQWFNSFVNPFLYPLCH. The Cytoplasmic portion of the chain corresponds to 365 to 391; sequence RRFQKAFWKILCVTKQPALSQNQSVSS.

The protein belongs to the G-protein coupled receptor 1 family. In terms of assembly, interacts with TSPAN4.

The protein localises to the cell membrane. Functionally, the H4 subclass of histamine receptors could mediate the histamine signals in peripheral tissues. Displays a significant level of constitutive activity (spontaneous activity in the absence of agonist). The protein is Histamine H4 receptor (Hrh4) of Mus musculus (Mouse).